The following is a 348-amino-acid chain: Zinc finger and SCAN domain-containing protein 16 (348 aa).

One can recognise an SCAN box domain in the interval 41-123 (RQHFRKLCYQ…TVLEDLEREL (83 aa)). Disordered stretches follow at residues 160–184 (PKKTQLEQEAGKPQRNGDKTRTKNE) and 205–226 (RLNKDTPQHPKSKDIIENEGRS). Residues 163-184 (TQLEQEAGKPQRNGDKTRTKNE) are compositionally biased toward basic and acidic residues. C2H2-type zinc fingers lie at residues 236–258 (YKCDECGKSFSHSSDLSKHRRTH), 264–286 (YKCDECGKAFIQRSHLIGHHRVH), 292–314 (YKCKECGKDFSGRTGLIQHQRIH), and 320–342 (YECDECGRPFRVSSALIRHQRIH).

Belongs to the krueppel C2H2-type zinc-finger protein family.

Its subcellular location is the nucleus. Its function is as follows. May be involved in transcriptional regulation. This Homo sapiens (Human) protein is Zinc finger and SCAN domain-containing protein 16 (ZSCAN16).